Reading from the N-terminus, the 423-residue chain is UPF0597 protein Emin_0811 (423 aa).

The protein belongs to the UPF0597 family.

The chain is UPF0597 protein Emin_0811 from Elusimicrobium minutum (strain Pei191).